A 546-amino-acid polypeptide reads, in one-letter code: MTTNYIFVTGGVVSSLGKGIAAASLAAILEARGLKVTMMKLDPYINVDPGTMSPTQHGEVFVTEDGAETDLDLGHYERFIRTKMTKRNNFTAGRVYADVLRKERRGDYLGATIQVIPHITNAIKERVISGAEGHDIAIVEVGGTVGDIESLPFMEAIRQLAVELGRERAMFMHLTLVPYLGAAGELKTKPTQHSVKELLSIGIQPDILVCRSDRVIPANERKKIALFCNVQEKAVISMKDVDSIYKIPQLIKAQGTDDLVCQRFGITAPEADLSEWEQVIYEEANPTGDVVIGMVGKYIELPDAYKSVNEALKHAGLKNRLNVTIKYVDSQDVESKGTEILEGLDAILVPGGFGDRGVEGKILAAQYARENKVPYLGICLGMQVALIEYARNVANMEGAHSSEFSKDTKFPVVGLITEWIDSEGNVEERTEKSDLGGTMRLGSQLCHLAKGSKARELYGNATVEERHRHRYEVNNNLLPQLEKAGLKVSGLSADKKLVEIIEIPNHPWFVAAQFHPEFTSTPRDGHPLFEGFVKAAGESVRGELEK.

Positions 1 to 266 (MTTNYIFVTG…DDLVCQRFGI (266 aa)) are amidoligase domain. A CTP-binding site is contributed by Ser-14. Residue Ser-14 coordinates UTP. Residues 15–20 (SLGKGI) and Asp-72 contribute to the ATP site. Residues Asp-72 and Glu-140 each contribute to the Mg(2+) site. Residues 147–149 (DIE), 187–192 (KTKPTQ), and Lys-223 contribute to the CTP site. UTP-binding positions include 187–192 (KTKPTQ) and Lys-223. Residue 239–241 (KDV) coordinates ATP. The Glutamine amidotransferase type-1 domain maps to 291–542 (VIGMVGKYIE…VKAAGESVRG (252 aa)). Residue Gly-352 participates in L-glutamine binding. The active-site Nucleophile; for glutamine hydrolysis is the Cys-379. Residues 380-383 (LGMQ), Glu-403, and Arg-470 each bind L-glutamine. Catalysis depends on residues His-515 and Glu-517.

This sequence belongs to the CTP synthase family. In terms of assembly, homotetramer.

It catalyses the reaction UTP + L-glutamine + ATP + H2O = CTP + L-glutamate + ADP + phosphate + 2 H(+). It carries out the reaction L-glutamine + H2O = L-glutamate + NH4(+). The enzyme catalyses UTP + NH4(+) + ATP = CTP + ADP + phosphate + 2 H(+). It functions in the pathway pyrimidine metabolism; CTP biosynthesis via de novo pathway; CTP from UDP: step 2/2. Its activity is regulated as follows. Allosterically activated by GTP, when glutamine is the substrate; GTP has no effect on the reaction when ammonia is the substrate. The allosteric effector GTP functions by stabilizing the protein conformation that binds the tetrahedral intermediate(s) formed during glutamine hydrolysis. Inhibited by the product CTP, via allosteric rather than competitive inhibition. Catalyzes the ATP-dependent amination of UTP to CTP with either L-glutamine or ammonia as the source of nitrogen. Regulates intracellular CTP levels through interactions with the four ribonucleotide triphosphates. The polypeptide is CTP synthase (Aliivibrio fischeri (strain MJ11) (Vibrio fischeri)).